A 923-amino-acid polypeptide reads, in one-letter code: Neuropilin-1 (923 aa).

The N-terminal stretch at methionine 1–alanine 21 is a signal peptide. The Extracellular portion of the chain corresponds to phenylalanine 22 to proline 856. Intrachain disulfides connect cysteine 27–cysteine 54, cysteine 82–cysteine 104, and cysteine 147–cysteine 173. 2 consecutive CUB domains span residues cysteine 27–phenylalanine 141 and cysteine 147–leucine 265. Asparagine 150 is a glycosylation site (N-linked (GlcNAc...) asparagine). 3 residues coordinate Ca(2+): glutamate 195, aspartate 209, and aspartate 250. Cysteine 206 and cysteine 228 form a disulfide bridge. N-linked (GlcNAc...) asparagine glycosylation is found at asparagine 261, asparagine 300, and asparagine 522. 2 disulfide bridges follow: cysteine 275–cysteine 424 and cysteine 431–cysteine 583. 2 consecutive F5/8 type C domains span residues cysteine 275–cysteine 424 and cysteine 431–cysteine 583. The O-linked (Xyl...) (chondroitin sulfate) serine; alternate glycan is linked to serine 612. A glycan (O-linked (Xyl...) (heparan sulfate) serine; alternate) is linked at serine 612. The MAM domain occupies threonine 645–lysine 811. Positions threonine 820–arginine 845 are disordered. Serine 829 carries an O-linked (Xyl...) (chondroitin sulfate) serine glycan. Asparagine 842 carries an N-linked (GlcNAc...) asparagine glycan. A helical membrane pass occupies residues isoleucine 857 to leucine 879. The Cytoplasmic segment spans residues tyrosine 880–alanine 923. Serine 894 is subject to Phosphoserine.

This sequence belongs to the neuropilin family. In terms of assembly, homodimer, and heterodimer with NRP2. Binds PLXNB1. Interacts with FER. Interacts with VEGFA. Interacts with ABCB8/MITOSUR in mitochondria. Nervous system.

It localises to the mitochondrion membrane. The protein localises to the cell membrane. It is found in the cytoplasm. Functionally, receptor involved in the development of the cardiovascular system, in angiogenesis, in the formation of certain neuronal circuits and in organogenesis outside the nervous system. Mediates the chemorepulsant activity of semaphorins. Recognizes a C-end rule (CendR) motif R/KXXR/K on its ligands which causes cellular internalization and vascular leakage. Binds to semaphorin 3A (SEMA3A), the PLGF-2 isoform of PGF, the VEGF165 isoform of VEGFA and VEGFB. Coexpression with KDR results in increased VEGF165 binding to KDR as well as increased chemotaxis. Regulates VEGF-induced angiogenesis. Binding to VEGFA initiates a signaling pathway needed for motor neuron axon guidance and cell body migration, including for the caudal migration of facial motor neurons from rhombomere 4 to rhombomere 6 during embryonic development. Regulates mitochondrial iron transport via interaction with ABCB8/MITOSUR. The sequence is that of Neuropilin-1 from Mus musculus (Mouse).